Here is a 354-residue protein sequence, read N- to C-terminus: Envelope protein US28 (354 aa).

At 1–37 (MTPTTTTAELTTEFDYDEDATPCVFTDVLNQSKPVTL) the chain is on the extracellular side. N-linked (GlcNAc...) asparagine; by host glycosylation is present at Asn30. The chain crosses the membrane as a helical span at residues 38-58 (FLYGVVFLFGSIGNFLVIFTI). The Cytoplasmic segment spans residues 59–69 (TWRRRIQCSGD). A helical transmembrane segment spans residues 70 to 90 (VYFINLAAADLLFVCTLPLWM). The Extracellular segment spans residues 91 to 101 (QYLLDHNSLAS). A helical transmembrane segment spans residues 102–122 (VPCTLLTACFYVAMFASLCFI). Residues 123–145 (TEIALDRYYAIVYMRYRPVKQAC) are Cytoplasmic-facing. The helical transmembrane segment at 146 to 166 (LFSIFWWIFAVIIAIPHFMVV) threads the bilayer. At 167–183 (TKKDNQCMTDYDYLEVS) the chain is on the extracellular side. A helical transmembrane segment spans residues 184–204 (YPIILNVELMLGAFVIPLSVI). Over 205–228 (SYCYYRISRIVAVSQSRHKGRIVR) the chain is Cytoplasmic. A helical transmembrane segment spans residues 229–249 (VLIAVVLVFIIFWLPYHLTLF). The Extracellular segment spans residues 250–273 (VDTLKLLKWISSSCEFERSLKRAL). A helical transmembrane segment spans residues 274–294 (ILTESLAFCHCCLNPLLYVFV). Residues 295–354 (GTKFRQELHCLLAEFRQRLFSRDVSWYHSMSFSRRGSPSRRETSSDTLSDEVCRVSQIIP) are Cytoplasmic-facing.

The protein belongs to the G-protein coupled receptor 1 family. In terms of assembly, interacts with host GPRASP1; this interaction targets US28 to lysosomes for degradation. Interacts with host CX3CL1/Fractalkine (via N-terminus). Phosphorylated. High phosphorylation occurs concomitantly with receptor endocytosis and correlate with low receptor presence at the plasma membrane.

It is found in the host cell membrane. In terms of biological role, receptor for a C-C type chemokine. Binds to a great number of different CC-chemokines including CCL5/RANTES, CCL2/MCP-1, CCL3/MIP-1-alpha as well as CX3CL1/Fractalkine. Transduces signals resulting in the activation of MAP kinase signaling pathways and augmentation of intracellular calcium ion levels, leading to alterations in chemotactic behavior of vascular smooth muscle cells and macrophages. The US28 receptor also exhibits high levels of agonist-independent signaling activity and agonist-independent endocytosis. Interacts with the host Gi complex without activating it, thereby probably interfering with the chemokine-Gi signaling. May also function as a G protein sink to sequester G protein from the cell surface via internalization. Interacts with endogenous Gaq/11 subunits and thereby constitutively activates phospholipase C. The polypeptide is Envelope protein US28 (US28) (Human cytomegalovirus (strain Merlin) (HHV-5)).